The sequence spans 709 residues: Polyribonucleotide nucleotidyltransferase (709 aa).

2 residues coordinate Mg(2+): Asp487 and Asp493. The region spanning 554–613 (PRIHTMKISSDKIKDVIGKGGAVIRALCEETGTTIEIEDDGTIKIAATEGAAAKEAIRRI) is the KH domain. In terms of domain architecture, S1 motif spans 623–691 (GKIYTGKVMR…RQGRIRLSIK (69 aa)).

Belongs to the polyribonucleotide nucleotidyltransferase family. Component of the RNA degradosome, which is a multiprotein complex involved in RNA processing and mRNA degradation. Requires Mg(2+) as cofactor.

It is found in the cytoplasm. The enzyme catalyses RNA(n+1) + phosphate = RNA(n) + a ribonucleoside 5'-diphosphate. In terms of biological role, involved in mRNA degradation. Catalyzes the phosphorolysis of single-stranded polyribonucleotides processively in the 3'- to 5'-direction. The sequence is that of Polyribonucleotide nucleotidyltransferase from Aliivibrio fischeri (strain MJ11) (Vibrio fischeri).